Reading from the N-terminus, the 156-residue chain is Small ribosomal subunit protein uS7 (156 aa).

This sequence belongs to the universal ribosomal protein uS7 family. As to quaternary structure, part of the 30S ribosomal subunit. Contacts proteins S9 and S11.

In terms of biological role, one of the primary rRNA binding proteins, it binds directly to 16S rRNA where it nucleates assembly of the head domain of the 30S subunit. Is located at the subunit interface close to the decoding center, probably blocks exit of the E-site tRNA. This chain is Small ribosomal subunit protein uS7, found in Salmonella choleraesuis (strain SC-B67).